A 476-amino-acid chain; its full sequence is Zinc transporter SLC39A7 (476 aa).

Residues 7-27 form a helical membrane-spanning segment; it reads APHWVAVGLLTWAALGLLVAG. Basic and acidic residues predominate over residues 35–109; the sequence is HKDVEEDFHG…SHGHSHDSLH (75 aa). The disordered stretch occupies residues 35–131; the sequence is HKDVEEDFHG…HGTSREAGAP (97 aa). At His73 the chain carries Pros-methylhistidine. A compositionally biased stretch (basic residues) spans 110-120; sequence HGGHGHAHREH. The next 3 helical transmembrane spans lie at 146 to 166, 177 to 197, and 222 to 242; these read ALGA…LIPV, LQIL…LHLI, and GPIL…LVVE. Residues 249–320 form a disordered region; that stretch reads KGGHGHSHGH…QSPEEEKAGS (72 aa). Over residues 257 to 292 the composition is skewed to basic and acidic residues; it reads GHGDRHAHGDSHTHGDRHECSSKEKPSTEEEKEVGG. Ser283 carries the phosphoserine modification. The next 2 membrane-spanning stretches (helical) occupy residues 393-413 and 417-437; these read VTAI…GGAV and VAGG…FIYV.

Belongs to the ZIP transporter (TC 2.A.5) family. KE4/Catsup subfamily. In terms of assembly, homodimer. Methylation at some His residue by METTL9 leads to reduced zinc-binding. In terms of processing, rapidly phosphorylated by CK2 following Zn(2+) treatment. This phosphorylation is required for efficient cytosolic Zn(2+) release. Widely expressed. Highly expressed in the intestinal crypts.

It is found in the endoplasmic reticulum membrane. It localises to the golgi apparatus. The protein localises to the cis-Golgi network membrane. The catalysed reaction is Zn(2+)(in) = Zn(2+)(out). Transports Zn(2+) from the endoplasmic reticulum (ER)/Golgi apparatus to the cytosol, playing an essential role in the regulation of cytosolic zinc levels. Acts as a gatekeeper of zinc release from intracellular stores, requiring post-translational activation by phosphorylation, resulting in activation of multiple downstream pathways leading to cell growth and proliferation. Has an essential role in B cell development and is required for proper B cell receptor signaling. Plays an important role in maintaining intestinal epithelial homeostasis and skin dermis development by regulating ER function. Controls cell signaling pathways involved in glucose metabolism in skeletal muscle. Has a protective role against ER stress in different biological contexts. Mediates Zn(2+)-induced ferroptosis. This is Zinc transporter SLC39A7 (Slc39a7) from Mus musculus (Mouse).